Reading from the N-terminus, the 507-residue chain is 3-octaprenyl-4-hydroxybenzoate carboxy-lyase (507 aa).

Asparagine 177 contributes to the Mn(2+) binding site. Prenylated FMN is bound by residues 180 to 182, 194 to 196, and 199 to 200; these read IYR, RWL, and RG. Residue glutamate 243 coordinates Mn(2+). The active-site Proton donor is the aspartate 302.

It belongs to the UbiD family. In terms of assembly, homohexamer. Prenylated FMN is required as a cofactor. It depends on Mn(2+) as a cofactor.

Its subcellular location is the cell membrane. It carries out the reaction a 4-hydroxy-3-(all-trans-polyprenyl)benzoate + H(+) = a 2-(all-trans-polyprenyl)phenol + CO2. The protein operates within cofactor biosynthesis; ubiquinone biosynthesis. Functionally, catalyzes the decarboxylation of 3-octaprenyl-4-hydroxy benzoate to 2-octaprenylphenol, an intermediate step in ubiquinone biosynthesis. The protein is 3-octaprenyl-4-hydroxybenzoate carboxy-lyase of Cupriavidus metallidurans (strain ATCC 43123 / DSM 2839 / NBRC 102507 / CH34) (Ralstonia metallidurans).